The following is a 601-amino-acid chain: Elongation factor 4 (601 aa).

In terms of domain architecture, tr-type G spans 5-187 (ENIRNFCIIA…AIVHHLPAPK (183 aa)). GTP-binding positions include 17-22 (DHGKST) and 134-137 (NKID).

This sequence belongs to the TRAFAC class translation factor GTPase superfamily. Classic translation factor GTPase family. LepA subfamily.

The protein localises to the cell inner membrane. The enzyme catalyses GTP + H2O = GDP + phosphate + H(+). Functionally, required for accurate and efficient protein synthesis under certain stress conditions. May act as a fidelity factor of the translation reaction, by catalyzing a one-codon backward translocation of tRNAs on improperly translocated ribosomes. Back-translocation proceeds from a post-translocation (POST) complex to a pre-translocation (PRE) complex, thus giving elongation factor G a second chance to translocate the tRNAs correctly. Binds to ribosomes in a GTP-dependent manner. This chain is Elongation factor 4, found in Desulfovibrio desulfuricans (strain ATCC 27774 / DSM 6949 / MB).